The sequence spans 1555 residues: Pre-mRNA cleavage complex 2 protein Pcf11 (1555 aa).

Residue Ser2 is modified to N-acetylserine. A CID domain is found at 14–142 (AREDACRDYQ…ALDVRVNSLD (129 aa)). Position 120 is a phosphoserine; by WNK1 (Ser120). The residue at position 121 (Thr121) is a Phosphothreonine; by WNK1. Residues 167-186 (NKSPEEPSTPGTVVSSPSIS) form a disordered region. Phosphoserine occurs at positions 169 and 182. The segment covering 174 to 186 (STPGTVVSSPSIS) has biased composition (low complexity). The stretch at 202 to 239 (QLIRQQLLAKQKQLLELQQKKLELELEQAKAQLAVSLS) forms a coiled coil. Residues 266–648 (VKAPHQVPVQ…QQQHRLSVDA (383 aa)) are disordered. Residue Lys291 forms a Glycyl lysine isopeptide (Lys-Gly) (interchain with G-Cter in SUMO2) linkage. The span at 307–317 (HGKDQSHRKEF) shows a compositional bias: basic and acidic residues. Polar residues predominate over residues 320 to 333 (NTLNQSDTKTSKTI). A Glycyl lysine isopeptide (Lys-Gly) (interchain with G-Cter in SUMO2) cross-link involves residue Lys328. 3 stretches are compositionally biased toward basic and acidic residues: residues 342–364 (KQEK…DSKS), 380–421 (HTKD…DVKE), and 427–442 (EKKD…EHRL). Lys456 participates in a covalent cross-link: Glycyl lysine isopeptide (Lys-Gly) (interchain with G-Cter in SUMO2). Thr459 carries the phosphothreonine modification. Basic residues predominate over residues 475-486 (STRKRSRSRSPK). Ser489, Ser494, Ser509, and Ser511 each carry phosphoserine. Residues 494 to 508 (SPKRRDRRSPKRRQR) are compositionally biased toward basic residues. Residues 529–567 (SHMEEFTPPSREDRNAKRSTKQDIRDPRRMKKTEEERPQ) show a composition bias toward basic and acidic residues. The span at 568-578 (ETTNQHSTKSG) shows a compositional bias: polar residues. Residues 599–615 (SGWEENKSLQQVDEHSK) are compositionally biased toward basic and acidic residues. Ser645 carries the phosphoserine modification. A Glycyl lysine isopeptide (Lys-Gly) (interchain with G-Cter in SUMO2) cross-link involves residue Lys654. A Phosphoserine modification is found at Ser705. Disordered stretches follow at residues 707 to 732 (FNDR…PASR) and 749 to 781 (RPLF…PRID). Over residues 716–725 (PRYEDSDKPF) the composition is skewed to basic and acidic residues. Lys723 participates in a covalent cross-link: Glycyl lysine isopeptide (Lys-Gly) (interchain with G-Cter in SUMO2). Ser728 and Ser777 each carry phosphoserine. Thr785 carries the phosphothreonine modification. Ser794 bears the Phosphoserine mark. Arg805, Arg820, and Arg833 each carry asymmetric dimethylarginine. Position 851 is a phosphoserine (Ser851). Asymmetric dimethylarginine occurs at positions 929, 942, 955, 981, 994, and 1007. The segment at 1056-1081 (HGQPGPRFERTPGQPGPQRFDGPPGQ) is disordered. 2 positions are modified to asymmetric dimethylarginine: Arg1093 and Arg1104. Disordered stretches follow at residues 1127–1147 (VSFN…NAPS) and 1159–1187 (FDSP…RASG). At Ser1161 the chain carries Phosphoserine. Positions 1162–1175 (PQGPNFNGPHGPGN) are enriched in low complexity. Lys1278 participates in a covalent cross-link: Glycyl lysine isopeptide (Lys-Gly) (interchain with G-Cter in SUMO2). Polar residues predominate over residues 1289-1298 (SATTQVSEVT). Residues 1289–1315 (SATTQVSEVTAQPPPEEEEDQNEDQDV) form a disordered region. The segment covering 1303–1315 (PEEEEDQNEDQDV) has biased composition (acidic residues). Residues Lys1419, Lys1511, and Lys1524 each participate in a glycyl lysine isopeptide (Lys-Gly) (interchain with G-Cter in SUMO2) cross-link. Positions 1516–1555 (EPCDSPKVKEERIDTPPACTEESIATPSEIKTENDTVESV) are disordered. Residues 1519–1529 (DSPKVKEERID) are compositionally biased toward basic and acidic residues. Position 1530 is a phosphothreonine (Thr1530). Residue Lys1546 forms a Glycyl lysine isopeptide (Lys-Gly) (interchain with G-Cter in SUMO2) linkage.

As to quaternary structure, associates with the phosphorylated CTD domain of POLR2A /RNA polymerase II. In terms of processing, phosphorylation at Ser-120 and/or Thr-121 by WNK1 weakens its association with POLR2A/RNA polymerase II, promoting transcript release from the chromatin template and mRNA export to the cytoplasm.

Its subcellular location is the nucleus. Component of pre-mRNA cleavage complex II, which promotes transcription termination by RNA polymerase II. The chain is Pre-mRNA cleavage complex 2 protein Pcf11 from Homo sapiens (Human).